A 243-amino-acid chain; its full sequence is MILFPAVDIKDGRCVRLRQGRADAETVFSDDPAAMARHWQDQGAKWLHVIDLDGAFSGMPANFELIRRICADLSVPVQLGGGIRDEATAKAYLDAGVERLIIGTVALEEPDLYARLCATFPGRIGVSLDAEGGRLKTKGWVADSGLTVDDVLPRLLAAGTAFVIYTDIDRDGMQTGVNLSALERLAGMCPVPVIAAGGVATLEDVRALYPMTLTSSVEGAITGRAIYTGTLDLHAAMEWIAAQ.

The Proton acceptor role is filled by Asp8. Residue Asp129 is the Proton donor of the active site.

The protein belongs to the HisA/HisF family.

It localises to the cytoplasm. The enzyme catalyses 1-(5-phospho-beta-D-ribosyl)-5-[(5-phospho-beta-D-ribosylamino)methylideneamino]imidazole-4-carboxamide = 5-[(5-phospho-1-deoxy-D-ribulos-1-ylimino)methylamino]-1-(5-phospho-beta-D-ribosyl)imidazole-4-carboxamide. The protein operates within amino-acid biosynthesis; L-histidine biosynthesis; L-histidine from 5-phospho-alpha-D-ribose 1-diphosphate: step 4/9. The sequence is that of 1-(5-phosphoribosyl)-5-[(5-phosphoribosylamino)methylideneamino] imidazole-4-carboxamide isomerase from Nitratidesulfovibrio vulgaris (strain DSM 19637 / Miyazaki F) (Desulfovibrio vulgaris).